Consider the following 269-residue polypeptide: GTP cyclohydrolase FolE2 (269 aa).

It belongs to the GTP cyclohydrolase IV family.

The enzyme catalyses GTP + H2O = 7,8-dihydroneopterin 3'-triphosphate + formate + H(+). The protein operates within cofactor biosynthesis; 7,8-dihydroneopterin triphosphate biosynthesis; 7,8-dihydroneopterin triphosphate from GTP: step 1/1. Converts GTP to 7,8-dihydroneopterin triphosphate. This is GTP cyclohydrolase FolE2 from Burkholderia multivorans (strain ATCC 17616 / 249).